Consider the following 181-residue polypeptide: uncharacterized protein (181 aa).

At 1-14 (MQKCIMRSTEFKTH) the chain is on the cytoplasmic side. The helical transmembrane segment at 15 to 35 (FSFHSIFSFPLSAALLALISA) threads the bilayer. Residues 36–58 (SEPASKAFINVQFISSPLVKKEV) lie on the Extracellular side of the membrane. Residues 59 to 79 (LPFIVSFHSLSSNGILSFSPF) form a helical membrane-spanning segment. The Cytoplasmic portion of the chain corresponds to 80 to 84 (TSSNL). The helical transmembrane segment at 85–105 (SIAQLPFLIKVPLLSMGSLAL) threads the bilayer. The Extracellular portion of the chain corresponds to 106-116 (ENFNKFIPRAD). Residues 117–137 (LVAAWVTIIMVFTFGNFLSTL) form a helical membrane-spanning segment. Topologically, residues 138–153 (SIKTGQNLWHLSKISS) are cytoplasmic. The helical transmembrane segment at 154 to 174 (SVSPLLLGIILGSQSGEIMLG) threads the bilayer. Residues 175-181 (KNLLITS) are Extracellular-facing.

The protein resides in the membrane. This is an uncharacterized protein from Saccharomyces cerevisiae (strain ATCC 204508 / S288c) (Baker's yeast).